Consider the following 201-residue polypeptide: Probable quinol oxidase subunit 3 (201 aa).

5 consecutive transmembrane segments (helical) span residues 20 to 40, 62 to 82, 91 to 111, 133 to 153, and 172 to 192; these read LGFWIFLTAEFSLFGTLFATL, LVLIMTFALLISSYTCGISIY, LMMFWMILTVLLGLVFVGFEI, FFILLGTHGAHVSLGIGWIIC, and FIVSLYWHFLDVVWIFIFTAV.

Belongs to the cytochrome c oxidase subunit 3 family.

It localises to the cell membrane. The enzyme catalyses 2 a quinol + O2 = 2 a quinone + 2 H2O. Its function is as follows. Catalyzes quinol oxidation with the concomitant reduction of oxygen to water. This chain is Probable quinol oxidase subunit 3 (qoxC), found in Staphylococcus haemolyticus (strain JCSC1435).